The following is a 406-amino-acid chain: DNA-binding transcriptional repressor Mlc (406 aa).

The H-T-H motif DNA-binding region spans 33-42; that stretch reads RIDLSRLAQL. Zn(2+)-binding residues include histidine 247, cysteine 257, cysteine 259, and cysteine 264.

This sequence belongs to the ROK (NagC/XylR) family. Homodimer. Homotetramer. There is probably an equilibrium between the dimeric and the tetrameric form. Interacts with dephosphorylated PtsG. Mlc and PtsG EIIB domain form a complex with the 1:1 stoichiometry. Interacts with MtfA.

Its subcellular location is the cytoplasm. With respect to regulation, activity is modulated by glucose. In the presence of glucose, is inhibited by interaction with the dephosphorylated form of PtsG, which sequesters Mlc in the inner membrane and prevents Mlc binding to its target promoters. The restriction of conformational freedom resulting from the anchoring of four ends of Mlc to the membrane could be the primary cause of its loss of DNA-binding activity in vivo. Activity is also inhibited by interaction with the Mlc titration factor A (mtfA). The inactivation mechanisms of Mlc by dephosphorylated PtsG and MtfA differ significantly. Its function is as follows. Global regulator of carbohydrate metabolism. Represses the expression of several genes involved in sugar transport and utilization, in particular phosphoenolpyruvate-carbohydrate phosphotransferase system (PTS) genes. Represses expression of ptsG (EIICB(Glc)), which encodes the PTS system glucose-specific EIICB component. Also represses the expression of the manXYZ operon, encoding the mannose-specific PTS system, expression of malT, encoding the transcriptional activator of the maltose regulon, and expression of the pts operon, composed of the genes ptsH, ptsI and crr. Represses its own expression. Acts by binding to the regulatory region of the target genes. In Escherichia coli (strain K12), this protein is DNA-binding transcriptional repressor Mlc.